We begin with the raw amino-acid sequence, 301 residues long: Phosphate butyryltransferase (301 aa).

It belongs to the phosphate acetyltransferase and butyryltransferase family.

The catalysed reaction is butanoyl-CoA + phosphate = butanoyl phosphate + CoA. It participates in lipid metabolism; butanoate metabolism. Functionally, catalyzes the conversion of butyryl-CoA through butyryl phosphate to butyrate. The protein is Phosphate butyryltransferase (ptb) of Clostridium acetobutylicum (strain ATCC 824 / DSM 792 / JCM 1419 / IAM 19013 / LMG 5710 / NBRC 13948 / NRRL B-527 / VKM B-1787 / 2291 / W).